The chain runs to 149 residues: Small ribosomal subunit protein bS16 (149 aa).

The segment at 115-149 (KLKAAKSEADAKAKAEAEAAATEEAPAEEPAAEAE) is disordered. The segment covering 119–131 (AKSEADAKAKAEA) has biased composition (basic and acidic residues). Positions 139–149 (APAEEPAAEAE) are enriched in acidic residues.

Belongs to the bacterial ribosomal protein bS16 family.

The polypeptide is Small ribosomal subunit protein bS16 (Bifidobacterium adolescentis (strain ATCC 15703 / DSM 20083 / NCTC 11814 / E194a)).